Here is a 210-residue protein sequence, read N- to C-terminus: Large ribosomal subunit protein uL3 (210 aa).

Over residues G132–P144 the composition is skewed to basic residues. The segment at G132–P152 is disordered.

It belongs to the universal ribosomal protein uL3 family. In terms of assembly, part of the 50S ribosomal subunit. Forms a cluster with proteins L14 and L19.

Functionally, one of the primary rRNA binding proteins, it binds directly near the 3'-end of the 23S rRNA, where it nucleates assembly of the 50S subunit. This Heliobacterium modesticaldum (strain ATCC 51547 / Ice1) protein is Large ribosomal subunit protein uL3.